Reading from the N-terminus, the 291-residue chain is uncharacterized protein (291 aa).

Positions 5–196 (GVFSGGGVKG…LSNFPIWLFS (192 aa)) constitute a PNPLA domain. Residues 9–14 (GGGVKG) carry the GXGXXG motif. Residues 34–50 (VAGTSAGAIIAAFIASG) form a helical membrane-spanning segment. Positions 36–40 (GTSAG) match the GXSXG motif. Ser-38 serves as the catalytic Nucleophile. Asp-183 serves as the catalytic Proton acceptor. The DGA/G signature appears at 183–185 (DGG).

The protein resides in the cell membrane. Functionally, probable lipid hydrolase. This is an uncharacterized protein from Bacillus subtilis (strain 168).